The chain runs to 494 residues: Catalase isozyme 2 (494 aa).

Residues 1–29 form a disordered region; it reads MDPCKFRPSSSFDTKTTTTNAGQPVWNDN. A compositionally biased stretch (polar residues) spans 8 to 22; sequence PSSSFDTKTTTTNAG. Active-site residues include His65 and Asn138. Residue Tyr348 participates in heme binding.

The protein belongs to the catalase family. In terms of assembly, homotetramer. The cofactor is heme.

It localises to the peroxisome. The protein resides in the glyoxysome. The enzyme catalyses 2 H2O2 = O2 + 2 H2O. In terms of biological role, occurs in almost all aerobically respiring organisms and serves to protect cells from the toxic effects of hydrogen peroxide. This is Catalase isozyme 2 (CAT2) from Hordeum vulgare (Barley).